The sequence spans 607 residues: Elongation factor 4 (607 aa).

In terms of domain architecture, tr-type G spans 11-193 (GKIRNFSIIA…QIVEKVPAPT (183 aa)). GTP is bound by residues 23–28 (DHGKST) and 140–143 (NKID).

This sequence belongs to the TRAFAC class translation factor GTPase superfamily. Classic translation factor GTPase family. LepA subfamily.

The protein localises to the cell membrane. It catalyses the reaction GTP + H2O = GDP + phosphate + H(+). Its function is as follows. Required for accurate and efficient protein synthesis under certain stress conditions. May act as a fidelity factor of the translation reaction, by catalyzing a one-codon backward translocation of tRNAs on improperly translocated ribosomes. Back-translocation proceeds from a post-translocation (POST) complex to a pre-translocation (PRE) complex, thus giving elongation factor G a second chance to translocate the tRNAs correctly. Binds to ribosomes in a GTP-dependent manner. The sequence is that of Elongation factor 4 from Streptococcus pneumoniae (strain JJA).